The sequence spans 340 residues: DNA-directed RNA polymerase subunit alpha (340 aa).

Residues 1–233 (MIQNEIPIPA…NLFIPLLHEK (233 aa)) form an alpha N-terminal domain (alpha-NTD) region. The tract at residues 263 to 340 (RKEISFKHIF…LPKNKFSIND (78 aa)) is alpha C-terminal domain (alpha-CTD).

This sequence belongs to the RNA polymerase alpha chain family. In terms of assembly, in plastids the minimal PEP RNA polymerase catalytic core is composed of four subunits: alpha, beta, beta', and beta''. When a (nuclear-encoded) sigma factor is associated with the core the holoenzyme is formed, which can initiate transcription.

The protein localises to the plastid. The protein resides in the chloroplast. It catalyses the reaction RNA(n) + a ribonucleoside 5'-triphosphate = RNA(n+1) + diphosphate. In terms of biological role, DNA-dependent RNA polymerase catalyzes the transcription of DNA into RNA using the four ribonucleoside triphosphates as substrates. The sequence is that of DNA-directed RNA polymerase subunit alpha (rpoA) from Anthoceros angustus (Hornwort).